Consider the following 160-residue polypeptide: Small ribosomal subunit protein uS7 (160 aa).

It belongs to the universal ribosomal protein uS7 family. Part of the 30S ribosomal subunit. Contacts proteins S9 and S11.

One of the primary rRNA binding proteins, it binds directly to 16S rRNA where it nucleates assembly of the head domain of the 30S subunit. Is located at the subunit interface close to the decoding center, probably blocks exit of the E-site tRNA. The polypeptide is Small ribosomal subunit protein uS7 (Rickettsia typhi (strain ATCC VR-144 / Wilmington)).